A 183-amino-acid chain; its full sequence is ATP-dependent protease subunit HslV (183 aa).

The active site involves Thr2. Na(+) contacts are provided by Ala157, Cys160, and Thr163.

This sequence belongs to the peptidase T1B family. HslV subfamily. In terms of assembly, a double ring-shaped homohexamer of HslV is capped on each side by a ring-shaped HslU homohexamer. The assembly of the HslU/HslV complex is dependent on binding of ATP.

Its subcellular location is the cytoplasm. It carries out the reaction ATP-dependent cleavage of peptide bonds with broad specificity.. Allosterically activated by HslU binding. Functionally, protease subunit of a proteasome-like degradation complex believed to be a general protein degrading machinery. The protein is ATP-dependent protease subunit HslV of Marinomonas sp. (strain MWYL1).